The following is a 128-amino-acid chain: Protein yippee-like At3g08990 (128 aa).

One can recognise a Yippee domain in the interval 12–109; sequence LVYSCKYCQT…LERFKVLGPY (98 aa). Positions 16, 19, 72, and 75 each coordinate Zn(2+).

It belongs to the yippee family.

This chain is Protein yippee-like At3g08990, found in Arabidopsis thaliana (Mouse-ear cress).